Reading from the N-terminus, the 340-residue chain is MLHTIGILIWIIIKILVIVVPLLISVAYLTYAERKVIGYIQVRIGPNRVGLKGLLQPFADLLKLITKEIIVPTRSNKYLFVIAPLFALVPSLVGWAVIPFQEGIVLANINAGVLYLFAMSSLGVYGVLIAGWASNSKYAMFGALRSTAQTVSYEIAMGFALVGVLLAAGSMNLTDIVNSQKGGMLHWWFIPLLPLFLVFWISGIAETNRAPFDLAEGESEIVAGFHVEYSGIGFALFFLSEYASMILISTVLAILFMGGWLSPFEGITFLDQIFFIVPGFVWLLLKISFFLFVYLWVRATFPRYRYDQLMRLGWKVLIPVTIVWLIVTALMVVAHVKPWF.

A run of 8 helical transmembrane segments spans residues 4-24 (TIGI…PLLI), 78-98 (YLFV…WAVI), 113-133 (VLYL…AGWA), 151-171 (VSYE…AGSM), 184-204 (MLHW…ISGI), 244-264 (SMIL…LSPF), 273-293 (IFFI…FLFV), and 316-336 (VLIP…VAHV).

This sequence belongs to the complex I subunit 1 family. In terms of assembly, NDH-1 is composed of 14 different subunits. Subunits NuoA, H, J, K, L, M, N constitute the membrane sector of the complex.

The protein localises to the cell inner membrane. It carries out the reaction a quinone + NADH + 5 H(+)(in) = a quinol + NAD(+) + 4 H(+)(out). In terms of biological role, NDH-1 shuttles electrons from NADH, via FMN and iron-sulfur (Fe-S) centers, to quinones in the respiratory chain. The immediate electron acceptor for the enzyme in this species is believed to be ubiquinone. Couples the redox reaction to proton translocation (for every two electrons transferred, four hydrogen ions are translocated across the cytoplasmic membrane), and thus conserves the redox energy in a proton gradient. This subunit may bind ubiquinone. In Legionella pneumophila subsp. pneumophila (strain Philadelphia 1 / ATCC 33152 / DSM 7513), this protein is NADH-quinone oxidoreductase subunit H.